The sequence spans 344 residues: Tripartite motif-containing protein 44 (344 aa).

2 disordered regions span residues 1 to 25 and 68 to 165; these read MASG…EPDE and TPPA…EFDP. Basic and acidic residues predominate over residues 75-92; that stretch reads GAGKEEAEVKVEQEREIE. A compositionally biased stretch (acidic residues) spans 93-165; the sequence is SEAGEESESE…ETEAESEFDP (73 aa). A B box-type zinc finger spans residues 174-215; that stretch reads VAKRKCPDHGLDLSTYCQEDRQLICVLCPVIGAHQGHQLSTL. The Zn(2+) site is built by Cys-179, His-182, Cys-201, and His-207. Positions 290–325 form a coiled coil; the sequence is AHVTEILADIQSHMDRLMTQMAQAKEQLDTSNESAE. Residues 309-344 form a disordered region; sequence QMAQAKEQLDTSNESAEPKAEGDEEGPSGASEEEDT. Residues 330 to 344 show a composition bias toward acidic residues; sequence GDEEGPSGASEEEDT. Phosphoserine is present on residues Ser-336 and Ser-339.

In terms of assembly, interacts (via coiled coil) with TRIM17 (via coiled coil).

Functionally, may play a role in the process of differentiation and maturation of neuronal cells. May regulate the activity of TRIM17. Is a negative regulator of PAX6 expression. This Pongo abelii (Sumatran orangutan) protein is Tripartite motif-containing protein 44 (TRIM44).